Reading from the N-terminus, the 201-residue chain is Large ribosomal subunit protein uL4 (201 aa).

A disordered region spans residues 45 to 71 (AQKTRAEVTGSGKKPWRQKGTGRARAG).

This sequence belongs to the universal ribosomal protein uL4 family. As to quaternary structure, part of the 50S ribosomal subunit.

Its function is as follows. One of the primary rRNA binding proteins, this protein initially binds near the 5'-end of the 23S rRNA. It is important during the early stages of 50S assembly. It makes multiple contacts with different domains of the 23S rRNA in the assembled 50S subunit and ribosome. Forms part of the polypeptide exit tunnel. The polypeptide is Large ribosomal subunit protein uL4 (Shewanella halifaxensis (strain HAW-EB4)).